Here is a 135-residue protein sequence, read N- to C-terminus: Probable 5-hydroxyisourate hydrolase R09H10.3 (135 aa).

The signal sequence occupies residues 1 to 20 (MNKFSLFFALTATLMTITES). His30, Arg68, and Tyr132 together coordinate substrate.

Belongs to the transthyretin family. 5-hydroxyisourate hydrolase subfamily. As to quaternary structure, homotetramer.

It carries out the reaction 5-hydroxyisourate + H2O = 5-hydroxy-2-oxo-4-ureido-2,5-dihydro-1H-imidazole-5-carboxylate + H(+). Its function is as follows. Catalyzes the hydrolysis of 5-hydroxyisourate (HIU) to 2-oxo-4-hydroxy-4-carboxy-5-ureidoimidazoline (OHCU). This is Probable 5-hydroxyisourate hydrolase R09H10.3 from Caenorhabditis elegans.